The following is a 215-amino-acid chain: Cytochrome b6 (215 aa).

Residues 32-52 (IFYCLGGITLTCFLVQVASGF) form a helical membrane-spanning segment. Heme c is bound at residue C35. Residues H86 and H100 each contribute to the heme b site. Transmembrane regions (helical) follow at residues 90 to 110 (ASMM…TGGF), 116 to 136 (LTWV…VTGY), and 186 to 206 (LHTF…FLMI). 2 residues coordinate heme b: H187 and H202.

Belongs to the cytochrome b family. PetB subfamily. In terms of assembly, the 4 large subunits of the cytochrome b6-f complex are cytochrome b6, subunit IV (17 kDa polypeptide, PetD), cytochrome f and the Rieske protein, while the 4 small subunits are PetG, PetL, PetM and PetN. The complex functions as a dimer. Heme b is required as a cofactor. Requires heme c as cofactor.

It localises to the plastid. It is found in the chloroplast thylakoid membrane. Its function is as follows. Component of the cytochrome b6-f complex, which mediates electron transfer between photosystem II (PSII) and photosystem I (PSI), cyclic electron flow around PSI, and state transitions. The polypeptide is Cytochrome b6 (Anthoceros angustus (Hornwort)).